Consider the following 59-residue polypeptide: Large ribosomal subunit protein uL30 (59 aa).

It belongs to the universal ribosomal protein uL30 family. Part of the 50S ribosomal subunit.

In Solibacter usitatus (strain Ellin6076), this protein is Large ribosomal subunit protein uL30.